The primary structure comprises 228 residues: UPF0173 metal-dependent hydrolase lwe1590 (228 aa).

It belongs to the UPF0173 family.

This chain is UPF0173 metal-dependent hydrolase lwe1590, found in Listeria welshimeri serovar 6b (strain ATCC 35897 / DSM 20650 / CCUG 15529 / CIP 8149 / NCTC 11857 / SLCC 5334 / V8).